The following is a 155-amino-acid chain: Small ribosomal subunit protein uS7c (155 aa).

This sequence belongs to the universal ribosomal protein uS7 family. Part of the 30S ribosomal subunit.

It localises to the plastid. It is found in the chloroplast. In terms of biological role, one of the primary rRNA binding proteins, it binds directly to 16S rRNA where it nucleates assembly of the head domain of the 30S subunit. The polypeptide is Small ribosomal subunit protein uS7c (rps7) (Cornus mas (Cornelian cherry dogwood)).